The primary structure comprises 349 residues: Short chain dehydrogenase/reductase dpfgH (349 aa).

Residues 9 to 31 (LCIRVVDSLYGSFLYLPLAILFL) form a helical membrane-spanning segment. I65, R89, and D115 together coordinate NADP(+). N118 carries an N-linked (GlcNAc...) asparagine glycan. Positions 142 and 164 each coordinate NADP(+). Active-site proton donor residues include S191 and S192. NADP(+) is bound by residues Y223 and K227. The active-site Proton acceptor is the Y223. Catalysis depends on K227, which acts as the Lowers pKa of active site Tyr. Residue N334 is glycosylated (N-linked (GlcNAc...) asparagine).

It belongs to the short-chain dehydrogenases/reductases (SDR) family.

It localises to the membrane. It functions in the pathway secondary metabolite biosynthesis; terpenoid biosynthesis. Short chain dehydrogenase/reductase; part of the gene cluster that mediates the biosynthesis of diterpenoid pyrones. The first step of the pathway is the synthesis of the alpha-pyrone moiety by the polyketide synthase dpfgA via condensation of one acetyl-CoA starter unit with 3 malonyl-CoA units and 2 methylations. The alpha-pyrone is then combined with geranylgeranyl pyrophosphate (GGPP) formed by the GGPP synthase dpfgD through the action of the prenyltransferase dpfgC to yield a linear alpha-pyrone diterpenoid. Subsequent steps in the diterpenoid pyrone biosynthetic pathway involve the decalin core formation, which is initiated by the epoxidation of the C10-C11 olefin by the FAD-dependent oxidoreductase dpfgE, and is followed by a cyclization cascade catalyzed by the terpene cyclase dpfgB. The short chain dehydrogenase/reductase dpfgG then oxidizes the 8S hydroxy group to a ketone and the short chain dehydrogenase/reductase dpfgH reduces the ketone to the 8R hydroxy group to yield higginsianin B. Higginsianin B is further methylated by the methyltransferase dpfgI to produce the intermediate named FDDP B. The cytochrome P450 monooxygenase dfgpJ then catalyzes a three-step oxidation at C-27 to generate a carboxylic acid as well as C-26 hydroxylation. Finally, methyltransferase dpfgK methylates the carboxylic acid generated by dpfgJ, yielding the final diterpenoid pyrones from the pathway which were named FDDP D and FDDP E. The polypeptide is Short chain dehydrogenase/reductase dpfgH (Gibberella zeae (strain ATCC MYA-4620 / CBS 123657 / FGSC 9075 / NRRL 31084 / PH-1) (Wheat head blight fungus)).